We begin with the raw amino-acid sequence, 62 residues long: Small polypeptide DEVIL 17 (62 aa).

The required for DVL/RTFL small polypeptide activity stretch occupies residues 27-58 (RRNKGCLAMVKERRSRFYIARRCILMLLCWHK). The helical transmembrane segment at 39–56 (RRSRFYIARRCILMLLCW) threads the bilayer.

The protein belongs to the DVL/RTFL small polypeptides family.

It localises to the cell membrane. Functionally, small polypeptide acting as a regulatory molecule which coordinates cellular responses required for differentiation, growth and development, probably by restricting polar cell proliferation in lateral organs and coordinating socket cell recruitment and differentiation at trichome sites. The polypeptide is Small polypeptide DEVIL 17 (Arabidopsis thaliana (Mouse-ear cress)).